The sequence spans 335 residues: Beta-ketoacyl-[acyl-carrier-protein] synthase III (335 aa).

Residues Cys-119 and His-261 contribute to the active site. Positions Gln-262–Arg-266 are ACP-binding. Asn-291 is a catalytic residue.

This sequence belongs to the thiolase-like superfamily. FabH family. Homodimer.

It localises to the cytoplasm. The enzyme catalyses malonyl-[ACP] + acetyl-CoA + H(+) = 3-oxobutanoyl-[ACP] + CO2 + CoA. The protein operates within lipid metabolism; fatty acid biosynthesis. Its function is as follows. Catalyzes the condensation reaction of fatty acid synthesis by the addition to an acyl acceptor of two carbons from malonyl-ACP. Catalyzes the first condensation reaction which initiates fatty acid synthesis and may therefore play a role in governing the total rate of fatty acid production. Possesses both acetoacetyl-ACP synthase and acetyl transacylase activities. Its substrate specificity determines the biosynthesis of branched-chain and/or straight-chain of fatty acids. This Prochlorococcus marinus (strain MIT 9301) protein is Beta-ketoacyl-[acyl-carrier-protein] synthase III.